The chain runs to 181 residues: Thioredoxin M-type, chloroplastic (181 aa).

The N-terminal 67 residues, 1–67 (MAIENCLQLS…RQFRYSSVVC (67 aa)), are a transit peptide targeting the chloroplast. Residues 68 to 180 (KASEAVKEVQ…LTDSIEKYLS (113 aa)) form the Thioredoxin domain. Residues C104 and C107 each act as nucleophile in the active site. The cysteines at positions 104 and 107 are disulfide-linked.

This sequence belongs to the thioredoxin family. Plant M-type subfamily. As to quaternary structure, forms a complex with heterodimeric ferredoxin-thioredoxin reductase (FTR) and ferredoxin.

Its subcellular location is the plastid. The protein resides in the chloroplast. Functionally, participates in various redox reactions through the reversible oxidation of the active center dithiol to a disulfide. The M form is known to activate NADP-malate dehydrogenase. The polypeptide is Thioredoxin M-type, chloroplastic (Spinacia oleracea (Spinach)).